The sequence spans 1463 residues: Chitin binding domain (ChtBD2) containing chtb-1 (1463 aa).

The first 17 residues, 1–17, serve as a signal peptide directing secretion; it reads MLRNLILITLLVASGHG. The segment at 70–99 is disordered; sequence SSVPSVPAENTQPQQHPKARKPASPNICEQ. The Chitin-binding type-2 domain maps to 94 to 164; sequence PNICEQDNGA…IVPKRMSSLS (71 aa). Cys141 and Cys154 are oxidised to a cystine. 2 disordered regions span residues 720–773 and 841–869; these read IDSD…DFPI and KNPK…FPDS. The span at 722–734 shows a compositional bias: polar residues; it reads SDTNSTTNPSQPE. Basic residues-rich tracts occupy residues 740–756 and 843–853; these read NNTK…KPKK and PKKRKTKRRKQ.

The protein is Chitin binding domain (ChtBD2) containing chtb-1 of Caenorhabditis elegans.